Here is a 76-residue protein sequence, read N- to C-terminus: Cytochrome c oxidase subunit 6C (76 aa).

The Mitochondrial matrix portion of the chain corresponds to 4–22 (GALLPKPQMRGLLAKRLRV). Residues 23-44 (HIAGAFIVALGVAAAYKFGVAE) form a helical membrane-spanning segment. Residues 45-76 (PRKKAYAEFYRNYDSMKDFEEMRKAGIFQSAK) lie on the Mitochondrial intermembrane side of the membrane.

This sequence belongs to the cytochrome c oxidase subunit 6c family. In terms of assembly, component of the cytochrome c oxidase (complex IV, CIV), a multisubunit enzyme composed of 14 subunits. The complex is composed of a catalytic core of 3 subunits MT-CO1, MT-CO2 and MT-CO3, encoded in the mitochondrial DNA, and 11 supernumerary subunits COX4I, COX5A, COX5B, COX6A, COX6B, COX6C, COX7A, COX7B, COX7C, COX8 and NDUFA4, which are encoded in the nuclear genome. The complex exists as a monomer or a dimer and forms supercomplexes (SCs) in the inner mitochondrial membrane with NADH-ubiquinone oxidoreductase (complex I, CI) and ubiquinol-cytochrome c oxidoreductase (cytochrome b-c1 complex, complex III, CIII), resulting in different assemblies (supercomplex SCI(1)III(2)IV(1) and megacomplex MCI(2)III(2)IV(2)). Acetylation of Lys-61 is observed in liver mitochondria from fasted mice but not from fed mice.

It is found in the mitochondrion inner membrane. It participates in energy metabolism; oxidative phosphorylation. Component of the cytochrome c oxidase, the last enzyme in the mitochondrial electron transport chain which drives oxidative phosphorylation. The respiratory chain contains 3 multisubunit complexes succinate dehydrogenase (complex II, CII), ubiquinol-cytochrome c oxidoreductase (cytochrome b-c1 complex, complex III, CIII) and cytochrome c oxidase (complex IV, CIV), that cooperate to transfer electrons derived from NADH and succinate to molecular oxygen, creating an electrochemical gradient over the inner membrane that drives transmembrane transport and the ATP synthase. Cytochrome c oxidase is the component of the respiratory chain that catalyzes the reduction of oxygen to water. Electrons originating from reduced cytochrome c in the intermembrane space (IMS) are transferred via the dinuclear copper A center (CU(A)) of subunit 2 and heme A of subunit 1 to the active site in subunit 1, a binuclear center (BNC) formed by heme A3 and copper B (CU(B)). The BNC reduces molecular oxygen to 2 water molecules using 4 electrons from cytochrome c in the IMS and 4 protons from the mitochondrial matrix. The polypeptide is Cytochrome c oxidase subunit 6C (Cox6c) (Mus musculus (Mouse)).